Here is a 664-residue protein sequence, read N- to C-terminus: Macoilin (664 aa).

A run of 4 helical transmembrane segments spans residues 28–48, 75–95, 120–140, and 154–174; these read TFLY…DFVL, AFSV…LLFI, VCLP…AIRF, and FAAH…KSYV. Basic and acidic residues predominate over residues 252 to 265; that stretch reads YREKGKEKDKDAKK. The interval 252-274 is disordered; the sequence is YREKGKEKDKDAKKHNLGINNNN. Ser305 carries the post-translational modification Phosphoserine. Positions 320–348 are enriched in polar residues; that stretch reads KNYKNASGVVNSSPRSHSATNGSIPSSSS. A disordered region spans residues 320–375; that stretch reads KNYKNASGVVNSSPRSHSATNGSIPSSSSKNEKKQRCTSKGPSAHKDLMENCIPNN. Asn324 carries N-linked (GlcNAc...) asparagine glycosylation. At Ser332 the chain carries Phosphoserine. Asn340 and Asn452 each carry an N-linked (GlcNAc...) asparagine glycan. The interval 630–664 is disordered; it reads TSPLSPVSPHYSSKFVETSPSGLDPNASVYQPLKK. Ser631 and Ser634 each carry phosphoserine. Asn655 is a glycosylation site (N-linked (GlcNAc...) asparagine).

It belongs to the macoilin family.

It localises to the rough endoplasmic reticulum membrane. The protein resides in the nucleus membrane. Functionally, plays a role in the regulation of neuronal activity. This Rattus norvegicus (Rat) protein is Macoilin.